A 360-amino-acid polypeptide reads, in one-letter code: 3-dehydroquinate synthase (360 aa).

NAD(+)-binding positions include 71–76 (DGEQYK), 105–109 (GVVGD), 129–130 (TT), lysine 142, lysine 151, and 169–172 (TLNT). 3 residues coordinate Zn(2+): glutamate 184, histidine 248, and histidine 265.

This sequence belongs to the sugar phosphate cyclases superfamily. Dehydroquinate synthase family. The cofactor is Co(2+). Zn(2+) is required as a cofactor. It depends on NAD(+) as a cofactor.

The protein localises to the cytoplasm. It carries out the reaction 7-phospho-2-dehydro-3-deoxy-D-arabino-heptonate = 3-dehydroquinate + phosphate. It participates in metabolic intermediate biosynthesis; chorismate biosynthesis; chorismate from D-erythrose 4-phosphate and phosphoenolpyruvate: step 2/7. Catalyzes the conversion of 3-deoxy-D-arabino-heptulosonate 7-phosphate (DAHP) to dehydroquinate (DHQ). This Coxiella burnetii (strain CbuG_Q212) (Coxiella burnetii (strain Q212)) protein is 3-dehydroquinate synthase.